Consider the following 355-residue polypeptide: 3-dehydroquinate synthase (355 aa).

Residues 71–76 (EGEERK), 105–109 (GVVGD), 129–130 (TS), lysine 142, and lysine 151 each bind NAD(+). Glutamate 184, histidine 246, and histidine 263 together coordinate Zn(2+).

Belongs to the sugar phosphate cyclases superfamily. Dehydroquinate synthase family. Co(2+) serves as cofactor. The cofactor is Zn(2+). It depends on NAD(+) as a cofactor.

It localises to the cytoplasm. It carries out the reaction 7-phospho-2-dehydro-3-deoxy-D-arabino-heptonate = 3-dehydroquinate + phosphate. It participates in metabolic intermediate biosynthesis; chorismate biosynthesis; chorismate from D-erythrose 4-phosphate and phosphoenolpyruvate: step 2/7. Its function is as follows. Catalyzes the conversion of 3-deoxy-D-arabino-heptulosonate 7-phosphate (DAHP) to dehydroquinate (DHQ). This Streptococcus pneumoniae (strain 70585) protein is 3-dehydroquinate synthase.